Here is a 77-residue protein sequence, read N- to C-terminus: Large ribosomal subunit protein bL28 (77 aa).

It belongs to the bacterial ribosomal protein bL28 family.

The protein is Large ribosomal subunit protein bL28 of Leptothrix cholodnii (strain ATCC 51168 / LMG 8142 / SP-6) (Leptothrix discophora (strain SP-6)).